A 170-amino-acid chain; its full sequence is Large ribosomal subunit protein bL17 (170 aa).

Residues 134 to 144 (ASAKAAQAQEK) show a composition bias toward low complexity. Residues 134–170 (ASAKAAQAQEKPAQEEEVEATSDEVAYTSEPDKAAEH) form a disordered region.

The protein belongs to the bacterial ribosomal protein bL17 family. Part of the 50S ribosomal subunit. Contacts protein L32.

This is Large ribosomal subunit protein bL17 from Mycobacterium leprae (strain Br4923).